A 205-amino-acid polypeptide reads, in one-letter code: Holliday junction branch migration complex subunit RuvA (205 aa).

The interval 1–64 (MIGKLKGLID…EDQIKLFGFR (64 aa)) is domain I. Positions 65–143 (SDLEREWFRL…AFASVDPAVV (79 aa)) are domain II. The segment at 144–153 (ALSGALDERS) is flexible linker. The domain III stretch occupies residues 153-205 (SAPRPVTDAISALVNLGYGQPQAAAAIASASRSAGEGAETAQLIKLGLKELSK).

It belongs to the RuvA family. As to quaternary structure, homotetramer. Forms an RuvA(8)-RuvB(12)-Holliday junction (HJ) complex. HJ DNA is sandwiched between 2 RuvA tetramers; dsDNA enters through RuvA and exits via RuvB. An RuvB hexamer assembles on each DNA strand where it exits the tetramer. Each RuvB hexamer is contacted by two RuvA subunits (via domain III) on 2 adjacent RuvB subunits; this complex drives branch migration. In the full resolvosome a probable DNA-RuvA(4)-RuvB(12)-RuvC(2) complex forms which resolves the HJ.

It localises to the cytoplasm. Functionally, the RuvA-RuvB-RuvC complex processes Holliday junction (HJ) DNA during genetic recombination and DNA repair, while the RuvA-RuvB complex plays an important role in the rescue of blocked DNA replication forks via replication fork reversal (RFR). RuvA specifically binds to HJ cruciform DNA, conferring on it an open structure. The RuvB hexamer acts as an ATP-dependent pump, pulling dsDNA into and through the RuvAB complex. HJ branch migration allows RuvC to scan DNA until it finds its consensus sequence, where it cleaves and resolves the cruciform DNA. The protein is Holliday junction branch migration complex subunit RuvA of Rhodopseudomonas palustris (strain BisB18).